The primary structure comprises 461 residues: 23S rRNA (uracil(1939)-C(5))-methyltransferase RlmD (461 aa).

The interval 1–26 is disordered; that stretch reads MAKHERGLRFQPTGGSKAPQIPTGKK. The TRAM domain maps to 20–78; it reads QIPTGKKQRLSIERLANDGRGIAFFEGKTWFVLGALAGEEVEARVLGAHGKVVEARTER. Cysteine 91, cysteine 97, cysteine 100, and cysteine 179 together coordinate [4Fe-4S] cluster. Positions 283, 312, 317, 333, 360, and 381 each coordinate S-adenosyl-L-methionine. Cysteine 407 acts as the Nucleophile in catalysis.

Belongs to the class I-like SAM-binding methyltransferase superfamily. RNA M5U methyltransferase family. RlmD subfamily.

It carries out the reaction uridine(1939) in 23S rRNA + S-adenosyl-L-methionine = 5-methyluridine(1939) in 23S rRNA + S-adenosyl-L-homocysteine + H(+). Functionally, catalyzes the formation of 5-methyl-uridine at position 1939 (m5U1939) in 23S rRNA. This chain is 23S rRNA (uracil(1939)-C(5))-methyltransferase RlmD, found in Pseudomonas fluorescens (strain Pf0-1).